The primary structure comprises 404 residues: Tryptophan synthase beta chain (404 aa).

K99 carries the post-translational modification N6-(pyridoxal phosphate)lysine.

It belongs to the TrpB family. Tetramer of two alpha and two beta chains. The cofactor is pyridoxal 5'-phosphate.

The catalysed reaction is (1S,2R)-1-C-(indol-3-yl)glycerol 3-phosphate + L-serine = D-glyceraldehyde 3-phosphate + L-tryptophan + H2O. It functions in the pathway amino-acid biosynthesis; L-tryptophan biosynthesis; L-tryptophan from chorismate: step 5/5. Its function is as follows. The beta subunit is responsible for the synthesis of L-tryptophan from indole and L-serine. This chain is Tryptophan synthase beta chain, found in Rhizobium rhizogenes (strain K84 / ATCC BAA-868) (Agrobacterium radiobacter).